We begin with the raw amino-acid sequence, 196 residues long: Carnitine operon protein CaiE (196 aa).

Positions 173-196 (TQPLRQMEGNRPRLQGTTDVAPKR) are disordered.

This sequence belongs to the transferase hexapeptide repeat family.

It participates in amine and polyamine metabolism; carnitine metabolism. In terms of biological role, overproduction of CaiE stimulates the activity of CaiB and CaiD. The chain is Carnitine operon protein CaiE from Escherichia coli (strain SMS-3-5 / SECEC).